The following is a 63-amino-acid chain: MKATELREKSVEELNTELLNLLREQFNLRMQAASGQLQQTHVLKQLRRDVARVKTLLTEKAGA.

This sequence belongs to the universal ribosomal protein uL29 family.

This Erwinia tasmaniensis (strain DSM 17950 / CFBP 7177 / CIP 109463 / NCPPB 4357 / Et1/99) protein is Large ribosomal subunit protein uL29.